Here is a 99-residue protein sequence, read N- to C-terminus: Large ribosomal subunit protein bL27 (99 aa).

Residues 1 to 10 (MKLIFDIQLF) constitute a propeptide that is removed on maturation.

The protein belongs to the bacterial ribosomal protein bL27 family. In terms of processing, the N-terminus is cleaved by ribosomal processing cysteine protease Prp.

The sequence is that of Large ribosomal subunit protein bL27 from Caldicellulosiruptor saccharolyticus (strain ATCC 43494 / DSM 8903 / Tp8T 6331).